A 691-amino-acid chain; its full sequence is Serotransferrin-2 (691 aa).

A signal peptide spans 1 to 18 (MKLLLLSALLGCLATAYA). Transferrin-like domains lie at 25–329 (VKWC…SLKK) and 340–670 (IKWC…SLRK). A disulfide bridge links Cys-28 with Cys-50. Residues Asp-74 and Tyr-104 each contribute to the Fe(3+) site. Intrachain disulfides connect Cys-127/Cys-207, Cys-172/Cys-186, and Cys-235/Cys-249. Hydrogencarbonate contacts are provided by Thr-129, Ser-134, Gly-136, and Trp-137. An N-linked (GlcNAc...) asparagine glycan is attached at Asn-169. Residue Tyr-201 coordinates Fe(3+). His-257 contacts Fe(3+). 2 disulfide bridges follow: Cys-343–Cys-379 and Cys-353–Cys-370. Fe(3+) is bound by residues Asp-394 and Tyr-428. 7 cysteine pairs are disulfide-bonded: Cys-404–Cys-682, Cys-419–Cys-643, Cys-451–Cys-530, Cys-475–Cys-671, Cys-485–Cys-499, Cys-496–Cys-513, and Cys-570–Cys-584. Hydrogencarbonate is bound by residues Thr-453, Arg-457, Ala-459, and Gly-460. Fe(3+) is bound at residue Tyr-524. His-592 serves as a coordination point for Fe(3+).

This sequence belongs to the transferrin family. Monomer. Abundant in liver and serum with smaller amounts found in the stomach and kidney.

Its subcellular location is the secreted. In terms of biological role, transferrins are iron binding transport proteins which can bind two Fe(3+) ions in association with the binding of an anion, usually bicarbonate. It is responsible for the transport of iron from sites of absorption and heme degradation to those of storage and utilization. Serum transferrin may also have a further role in stimulating cell proliferation. The protein is Serotransferrin-2 (tf2) of Salmo salar (Atlantic salmon).